The primary structure comprises 274 residues: Exosome complex component Rrp42 (274 aa).

This sequence belongs to the RNase PH family. Rrp42 subfamily. In terms of assembly, component of the archaeal exosome complex. Forms a hexameric ring-like arrangement composed of 3 Rrp41-Rrp42 heterodimers. The hexameric ring associates with a trimer of Rrp4 and/or Csl4 subunits.

The protein resides in the cytoplasm. In terms of biological role, non-catalytic component of the exosome, which is a complex involved in RNA degradation. Contributes to the structuring of the Rrp41 active site. The protein is Exosome complex component Rrp42 of Pyrobaculum aerophilum (strain ATCC 51768 / DSM 7523 / JCM 9630 / CIP 104966 / NBRC 100827 / IM2).